We begin with the raw amino-acid sequence, 285 residues long: MATLLNGKELSEELKQKMKIEVDELKEKGLTPHLTVILVGDNPASKSYVKGKEKACAVTGISSNLIELPENISQDELLQIIDEQNNDDSVHGILVQLPLPDQMDEQKIIHAISPAKDVDGFHPINVGKMMTGEDTFIPCTPYGILTMLRSKDISLEGKHAVIIGRSNIVGKPIGLLLLQENATVTYTHSRTKNLQEITKQADILIVAIGRAHAINADYIKEDAVVIDVGINRKDDGKLTGDVDFESAEQKASYITPVPRGVGPMTITMLLKNTIKAAKGLNDVER.

NADP(+) contacts are provided by residues G164–S166, S189, and I230.

The protein belongs to the tetrahydrofolate dehydrogenase/cyclohydrolase family. In terms of assembly, homodimer.

The enzyme catalyses (6R)-5,10-methylene-5,6,7,8-tetrahydrofolate + NADP(+) = (6R)-5,10-methenyltetrahydrofolate + NADPH. It catalyses the reaction (6R)-5,10-methenyltetrahydrofolate + H2O = (6R)-10-formyltetrahydrofolate + H(+). It functions in the pathway one-carbon metabolism; tetrahydrofolate interconversion. Its function is as follows. Catalyzes the oxidation of 5,10-methylenetetrahydrofolate to 5,10-methenyltetrahydrofolate and then the hydrolysis of 5,10-methenyltetrahydrofolate to 10-formyltetrahydrofolate. This chain is Bifunctional protein FolD, found in Oceanobacillus iheyensis (strain DSM 14371 / CIP 107618 / JCM 11309 / KCTC 3954 / HTE831).